We begin with the raw amino-acid sequence, 146 residues long: Globin-1 (146 aa).

Residues 9 to 146 form the Globin domain; sequence QLTADVKKDL…KLVAVVQAAL (138 aa). Position 101 (H101) interacts with heme b.

The protein belongs to the globin family. As to quaternary structure, homodimer.

The protein resides in the cytoplasm. This is Globin-1 from Anadara broughtonii (Blood clam).